A 414-amino-acid chain; its full sequence is DNA primase small subunit PriS (414 aa).

Catalysis depends on residues Asp-98, Asp-100, and Asp-312.

The protein belongs to the eukaryotic-type primase small subunit family. Heterodimer of a small subunit (PriS) and a large subunit (PriL). Mg(2+) serves as cofactor. The cofactor is Mn(2+).

Functionally, catalytic subunit of DNA primase, an RNA polymerase that catalyzes the synthesis of short RNA molecules used as primers for DNA polymerase during DNA replication. The small subunit contains the primase catalytic core and has DNA synthesis activity on its own. Binding to the large subunit stabilizes and modulates the activity, increasing the rate of DNA synthesis while decreasing the length of the DNA fragments, and conferring RNA synthesis capability. The DNA polymerase activity may enable DNA primase to also catalyze primer extension after primer synthesis. May also play a role in DNA repair. The sequence is that of DNA primase small subunit PriS from Methanosarcina barkeri (strain Fusaro / DSM 804).